A 334-amino-acid polypeptide reads, in one-letter code: Glycerol-3-phosphate dehydrogenase [NAD(P)+] (334 aa).

The NADPH site is built by Trp13, Arg33, and Lys106. Sn-glycerol 3-phosphate is bound by residues Lys106, Gly137, and Ser139. Ala141 is an NADPH binding site. Lys192, Asp245, Ser255, Arg256, and Asn257 together coordinate sn-glycerol 3-phosphate. Catalysis depends on Lys192, which acts as the Proton acceptor. Residue Arg256 coordinates NADPH. NADPH contacts are provided by Val280 and Glu282.

This sequence belongs to the NAD-dependent glycerol-3-phosphate dehydrogenase family.

The protein resides in the cytoplasm. The enzyme catalyses sn-glycerol 3-phosphate + NAD(+) = dihydroxyacetone phosphate + NADH + H(+). The catalysed reaction is sn-glycerol 3-phosphate + NADP(+) = dihydroxyacetone phosphate + NADPH + H(+). It participates in membrane lipid metabolism; glycerophospholipid metabolism. Functionally, catalyzes the reduction of the glycolytic intermediate dihydroxyacetone phosphate (DHAP) to sn-glycerol 3-phosphate (G3P), the key precursor for phospholipid synthesis. The polypeptide is Glycerol-3-phosphate dehydrogenase [NAD(P)+] (Chlamydia trachomatis serovar A (strain ATCC VR-571B / DSM 19440 / HAR-13)).